The primary structure comprises 589 residues: Serine/threonine-protein kinase STE7 homolog (589 aa).

The segment covering 1–18 (MTRTTRIDTQEATKHKDL) has biased composition (basic and acidic residues). Disordered stretches follow at residues 1–162 (MTRT…DPDN) and 185–232 (RQHY…PASS). The span at 24 to 33 (PLSLSSNPNP) shows a compositional bias: low complexity. Over residues 57 to 69 (VKSTSGSLRSSDM) the composition is skewed to polar residues. The span at 92–121 (PTASSSATSTPTSNITGSSSASSIQFAQKS) shows a compositional bias: low complexity. 2 stretches are compositionally biased toward polar residues: residues 127–136 (IVSQTLSRPS) and 144–162 (SGYSSLNVNQSNRNVDPDN). The segment covering 185-203 (RQHYQNSHHHLPTTNRKRQ) has biased composition (basic residues). Positions 206-220 (ISSISPTKSSAASSP) are enriched in low complexity. In terms of domain architecture, Protein kinase spans 249–565 (LLTLKQLGSG…QLLEDKEHFF (317 aa)). ATP contacts are provided by residues 255–263 (LGSGNSGSV) and lysine 278. Aspartate 374 (proton acceptor) is an active-site residue. Serine 402 is subject to Phosphoserine. A Phosphothreonine modification is found at threonine 408. The disordered stretch occupies residues 473–499 (IAAERNGQNSPSRSRKNKQKGNGYNSY).

This sequence belongs to the protein kinase superfamily. STE Ser/Thr protein kinase family. MAP kinase kinase subfamily.

The catalysed reaction is L-seryl-[protein] + ATP = O-phospho-L-seryl-[protein] + ADP + H(+). It carries out the reaction L-threonyl-[protein] + ATP = O-phospho-L-threonyl-[protein] + ADP + H(+). It catalyses the reaction L-tyrosyl-[protein] + ATP = O-phospho-L-tyrosyl-[protein] + ADP + H(+). This chain is Serine/threonine-protein kinase STE7 homolog (HST7), found in Candida albicans (strain WO-1) (Yeast).